A 137-amino-acid chain; its full sequence is Small ribosomal subunit protein bS16m (137 aa).

Residues 1–34 constitute a mitochondrion transit peptide; that stretch reads MVHLTTLLCKAYRGGHLTIRLALGGCTNRPFYRI. T130 is subject to Phosphothreonine.

It belongs to the bacterial ribosomal protein bS16 family. In terms of assembly, component of the mitochondrial ribosome small subunit (28S) which comprises a 12S rRNA and about 30 distinct proteins.

Its subcellular location is the mitochondrion. This is Small ribosomal subunit protein bS16m (MRPS16) from Pongo abelii (Sumatran orangutan).